A 290-amino-acid polypeptide reads, in one-letter code: Tubulin beta-4B chain (290 aa).

The short motif at 1–4 is the MREI motif element; sequence MREI. A GTP-binding site is contributed by Gln-11. Position 55 is a phosphothreonine (Thr-55). Lys-58 carries the N6-acetyllysine modification. The GTP site is built by Glu-69, Ser-138, Gly-142, Thr-143, Gly-144, and Asn-172. Position 69 (Glu-69) interacts with Mg(2+).

Belongs to the tubulin family. As to quaternary structure, dimer of alpha and beta chains. A typical microtubule is a hollow water-filled tube with an outer diameter of 25 nm and an inner diameter of 15 nM. Alpha-beta heterodimers associate head-to-tail to form protofilaments running lengthwise along the microtubule wall with the beta-tubulin subunit facing the microtubule plus end conferring a structural polarity. Microtubules usually have 13 protofilaments but different protofilament numbers can be found in some organisms and specialized cells. Component of sperm flagellar doublet microtubules. It depends on Mg(2+) as a cofactor. In terms of processing, some glutamate residues at the C-terminus are polyglycylated, resulting in polyglycine chains on the gamma-carboxyl group. Glycylation is mainly limited to tubulin incorporated into axonemes (cilia and flagella) whereas glutamylation is prevalent in neuronal cells, centrioles, axonemes, and the mitotic spindle. Both modifications can coexist on the same protein on adjacent residues, and lowering polyglycylation levels increases polyglutamylation, and reciprocally. Cilia and flagella glycylation is required for their stability and maintenance. Flagella glycylation controls sperm motility. Some glutamate residues at the C-terminus are polyglutamylated, resulting in polyglutamate chains on the gamma-carboxyl group. Polyglutamylation plays a key role in microtubule severing by spastin (SPAST). SPAST preferentially recognizes and acts on microtubules decorated with short polyglutamate tails: severing activity by SPAST increases as the number of glutamates per tubulin rises from one to eight, but decreases beyond this glutamylation threshold. Glutamylation is also involved in cilia motility.

The protein localises to the cytoplasm. It is found in the cytoskeleton. It localises to the flagellum axoneme. In terms of biological role, tubulin is the major constituent of microtubules, a cylinder consisting of laterally associated linear protofilaments composed of alpha- and beta-tubulin heterodimers. Microtubules grow by the addition of GTP-tubulin dimers to the microtubule end, where a stabilizing cap forms. Below the cap, tubulin dimers are in GDP-bound state, owing to GTPase activity of alpha-tubulin. In Mesocricetus auratus (Golden hamster), this protein is Tubulin beta-4B chain (TUBB4B).